We begin with the raw amino-acid sequence, 880 residues long: DNA polymerase I (880 aa).

The region spanning 174–268 (TPEQIIDMKG…SGLEYQGFNR (95 aa)) is the 5'-3' exonuclease domain. The 3'-5' exonuclease domain maps to 302–470 (DINVKTVTDV…LREKLVQELE (169 aa)).

The protein belongs to the DNA polymerase type-A family. Single-chain monomer with multiple functions.

The enzyme catalyses DNA(n) + a 2'-deoxyribonucleoside 5'-triphosphate = DNA(n+1) + diphosphate. Its function is as follows. In addition to polymerase activity, this DNA polymerase exhibits 3'-5' and 5'-3' exonuclease activity. The chain is DNA polymerase I (polA) from Bacillus subtilis (strain 168).